The chain runs to 480 residues: 3-isopropylmalate dehydratase large subunit (480 aa).

Residues Cys-361, Cys-421, and Cys-424 each contribute to the [4Fe-4S] cluster site.

It belongs to the aconitase/IPM isomerase family. LeuC type 1 subfamily. In terms of assembly, heterodimer of LeuC and LeuD. It depends on [4Fe-4S] cluster as a cofactor.

It catalyses the reaction (2R,3S)-3-isopropylmalate = (2S)-2-isopropylmalate. It participates in amino-acid biosynthesis; L-leucine biosynthesis; L-leucine from 3-methyl-2-oxobutanoate: step 2/4. Functionally, catalyzes the isomerization between 2-isopropylmalate and 3-isopropylmalate, via the formation of 2-isopropylmaleate. This Corynebacterium diphtheriae (strain ATCC 700971 / NCTC 13129 / Biotype gravis) protein is 3-isopropylmalate dehydratase large subunit.